A 134-amino-acid polypeptide reads, in one-letter code: Profilin-2 (134 aa).

A disulfide bridge links C13 with C118. An Involved in PIP2 interaction motif is present at residues 84 to 100; sequence AVIRGKKGSGGITIKKT. T114 carries the phosphothreonine modification.

This sequence belongs to the profilin family. In terms of processing, phosphorylated by MAP kinases.

The protein resides in the cytoplasm. It is found in the cytoskeleton. In Olea europaea (Common olive), this protein is Profilin-2.